A 492-amino-acid polypeptide reads, in one-letter code: Probable cytochrome P450 313a3 (492 aa).

Residue cysteine 438 coordinates heme.

The protein belongs to the cytochrome P450 family. The cofactor is heme.

It localises to the endoplasmic reticulum membrane. The protein resides in the microsome membrane. In terms of biological role, may be involved in the metabolism of insect hormones and in the breakdown of synthetic insecticides. The chain is Probable cytochrome P450 313a3 (Cyp313a3) from Drosophila melanogaster (Fruit fly).